A 154-amino-acid polypeptide reads, in one-letter code: MNTIQGHVVAEGLKFAIVVARFNDFITSKLLDGAEDTLLRHGANGDDIDVVWVPGAFEIPYMAKKLAETEKYDAVITLGTVIRGATTHYDYVCNEAAKGIAQSAMSTGVPIIFGVLTTESIEQAIERAGTKAGNKGSESAAAAIEMANLNRTFR.

Residues phenylalanine 22, 56-58 (AFE), and 80-82 (TVI) each bind 5-amino-6-(D-ribitylamino)uracil. 85 to 86 (AT) contacts (2S)-2-hydroxy-3-oxobutyl phosphate. Histidine 88 (proton donor) is an active-site residue. A 5-amino-6-(D-ribitylamino)uracil-binding site is contributed by phenylalanine 113. Arginine 127 lines the (2S)-2-hydroxy-3-oxobutyl phosphate pocket.

It belongs to the DMRL synthase family. Forms an icosahedral capsid composed of 60 subunits, arranged as a dodecamer of pentamers.

The catalysed reaction is (2S)-2-hydroxy-3-oxobutyl phosphate + 5-amino-6-(D-ribitylamino)uracil = 6,7-dimethyl-8-(1-D-ribityl)lumazine + phosphate + 2 H2O + H(+). It participates in cofactor biosynthesis; riboflavin biosynthesis; riboflavin from 2-hydroxy-3-oxobutyl phosphate and 5-amino-6-(D-ribitylamino)uracil: step 1/2. In terms of biological role, catalyzes the formation of 6,7-dimethyl-8-ribityllumazine by condensation of 5-amino-6-(D-ribitylamino)uracil with 3,4-dihydroxy-2-butanone 4-phosphate. This is the penultimate step in the biosynthesis of riboflavin. The chain is 6,7-dimethyl-8-ribityllumazine synthase from Bacillus pumilus (strain SAFR-032).